We begin with the raw amino-acid sequence, 91 residues long: Small ribosomal subunit protein uS15 (91 aa).

Belongs to the universal ribosomal protein uS15 family. Part of the 30S ribosomal subunit. Forms a bridge to the 50S subunit in the 70S ribosome, contacting the 23S rRNA.

Functionally, one of the primary rRNA binding proteins, it binds directly to 16S rRNA where it helps nucleate assembly of the platform of the 30S subunit by binding and bridging several RNA helices of the 16S rRNA. In terms of biological role, forms an intersubunit bridge (bridge B4) with the 23S rRNA of the 50S subunit in the ribosome. The chain is Small ribosomal subunit protein uS15 from Rickettsia peacockii (strain Rustic).